Here is a 1085-residue protein sequence, read N- to C-terminus: Tudor domain-containing protein 7B (1085 aa).

The HTH OST-type 1 domain maps to Asp-3–Thr-76. Disordered regions lie at residues Ala-112–Arg-183, Arg-200–Tyr-228, and Pro-297–Ser-341. Residues Gln-203–Thr-216 are compositionally biased toward polar residues. An HTH OST-type 2 domain is found at Ser-229–Lys-299. Polar residues predominate over residues Thr-322 to Glu-335. The HTH OST-type 3 domain maps to Leu-340–Val-410. Tudor domains follow at residues Ser-496–Leu-554 and Arg-686–Asp-743. A compositionally biased stretch (polar residues) spans Asn-843 to Leu-853. A disordered region spans residues Asn-843–Leu-888.

It localises to the cytoplasm. Component of specific cytoplasmic RNA granules involved in post-transcriptional regulation of specific genes: probably acts by binding to specific mRNAs and regulating their translation. Probably required during spermatogenesis. This is Tudor domain-containing protein 7B (tdrd7b) from Danio rerio (Zebrafish).